A 720-amino-acid polypeptide reads, in one-letter code: Methionine--tRNA ligase (720 aa).

The short motif at proline 27–histidine 37 is the 'HIGH' region element. Residues cysteine 158, cysteine 161, cysteine 171, and cysteine 174 each coordinate Zn(2+). The short motif at lysine 348–serine 352 is the 'KMSKS' region element. Lysine 351 provides a ligand contact to ATP. The region spanning aspartate 614–lysine 720 is the tRNA-binding domain.

Belongs to the class-I aminoacyl-tRNA synthetase family. MetG type 1 subfamily. In terms of assembly, homodimer. Requires Zn(2+) as cofactor.

It localises to the cytoplasm. It catalyses the reaction tRNA(Met) + L-methionine + ATP = L-methionyl-tRNA(Met) + AMP + diphosphate. Is required not only for elongation of protein synthesis but also for the initiation of all mRNA translation through initiator tRNA(fMet) aminoacylation. This chain is Methionine--tRNA ligase, found in Burkholderia lata (strain ATCC 17760 / DSM 23089 / LMG 22485 / NCIMB 9086 / R18194 / 383).